We begin with the raw amino-acid sequence, 294 residues long: 4-hydroxy-tetrahydrodipicolinate synthase (294 aa).

Pyruvate is bound at residue Thr-44. Tyr-132 functions as the Proton donor/acceptor in the catalytic mechanism. Residue Lys-161 is the Schiff-base intermediate with substrate of the active site. Ile-206 is a binding site for pyruvate.

The protein belongs to the DapA family. Homotetramer; dimer of dimers.

The protein resides in the cytoplasm. The catalysed reaction is L-aspartate 4-semialdehyde + pyruvate = (2S,4S)-4-hydroxy-2,3,4,5-tetrahydrodipicolinate + H2O + H(+). Its pathway is amino-acid biosynthesis; L-lysine biosynthesis via DAP pathway; (S)-tetrahydrodipicolinate from L-aspartate: step 3/4. Functionally, catalyzes the condensation of (S)-aspartate-beta-semialdehyde [(S)-ASA] and pyruvate to 4-hydroxy-tetrahydrodipicolinate (HTPA). The protein is 4-hydroxy-tetrahydrodipicolinate synthase of Thermotoga neapolitana (strain ATCC 49049 / DSM 4359 / NBRC 107923 / NS-E).